Here is a 448-residue protein sequence, read N- to C-terminus: MGRLFGTDGVRGVANRELTAELALALGAAAARRLSRSGAPGRRVAVLGRDPRASGEMLEAAVIAGLTSEGVDALRVGVLPTPAVAYLTGAYDADFGVMISASHNPMPDNGIKIFGPGGHKLDDDTEDQIEDLVLGVSRGPGLRPAGAGIGRVIDAEDATERYLRHVAKAATARLDDLAVVVDCAHGAASSAAPRAYRAAGARVIAINAEPNGRNINDGCGSTHLDPLRAAVLAHRADLGLAHDGDADRCLAVDANGDLVDGDAIMVVLALAMKEAGELACNTLVATVMSNLGLHLAMRSAGVTVRTTAVGDRYVLEELRAGDYSLGGEQSGHIVMPALGSTGDGIVTGLRLMTRMVQTGSSLSDLASAMRTLPQVLINVEVVDKATAAAAPSVRTAVEQAAAELGDTGRILLRPSGTEPMIRVMVEAADEGVAQRLAATVADAVSTAR.

Residue S102 is the Phosphoserine intermediate of the active site. The Mg(2+) site is built by S102, D243, D245, and D247. S102 carries the post-translational modification Phosphoserine.

Belongs to the phosphohexose mutase family. Mg(2+) serves as cofactor. In terms of processing, activated by phosphorylation.

The catalysed reaction is alpha-D-glucosamine 1-phosphate = D-glucosamine 6-phosphate. Its function is as follows. Catalyzes the conversion of glucosamine-6-phosphate to glucosamine-1-phosphate. The protein is Phosphoglucosamine mutase of Mycobacterium bovis (strain ATCC BAA-935 / AF2122/97).